The following is a 168-amino-acid chain: Signal peptidase I V (168 aa).

The Cytoplasmic segment spans residues 1–6 (MKKRFW). The chain crosses the membrane as a helical span at residues 7 to 26 (FLAGVVSVVLAIQVKNAVFI). Over 27 to 168 (DYKVEGVSMN…NIVGVISDAE (142 aa)) the chain is Extracellular. Active-site residues include Ser-34 and Lys-75.

Belongs to the peptidase S26 family.

It is found in the cell membrane. It catalyses the reaction Cleavage of hydrophobic, N-terminal signal or leader sequences from secreted and periplasmic proteins.. The sequence is that of Signal peptidase I V (sipV) from Bacillus subtilis (strain 168).